The following is a 294-amino-acid chain: Elongation factor Ts (294 aa).

The tract at residues 79 to 82 (TDFV) is involved in Mg(2+) ion dislocation from EF-Tu.

It belongs to the EF-Ts family.

The protein localises to the cytoplasm. Functionally, associates with the EF-Tu.GDP complex and induces the exchange of GDP to GTP. It remains bound to the aminoacyl-tRNA.EF-Tu.GTP complex up to the GTP hydrolysis stage on the ribosome. This is Elongation factor Ts from Oceanobacillus iheyensis (strain DSM 14371 / CIP 107618 / JCM 11309 / KCTC 3954 / HTE831).